The primary structure comprises 78 residues: MSRVCELTGAKANNGMAVSHSHIRTKKLQQVNLQKRRLWWEEGKKWVNIKISTKALKSIQKVGLDKFAKSNGVDLNKF.

Belongs to the bacterial ribosomal protein bL28 family.

The sequence is that of Large ribosomal subunit protein bL28 from Prochlorococcus marinus (strain MIT 9301).